Consider the following 149-residue polypeptide: 3-dehydroquinate dehydratase (149 aa).

Y26 functions as the Proton acceptor in the catalytic mechanism. 3 residues coordinate substrate: N77, H83, and D90. The active-site Proton donor is H103. Residues 104-105 (LS) and R114 contribute to the substrate site.

It belongs to the type-II 3-dehydroquinase family. As to quaternary structure, homododecamer.

The enzyme catalyses 3-dehydroquinate = 3-dehydroshikimate + H2O. It functions in the pathway metabolic intermediate biosynthesis; chorismate biosynthesis; chorismate from D-erythrose 4-phosphate and phosphoenolpyruvate: step 3/7. Catalyzes a trans-dehydration via an enolate intermediate. The polypeptide is 3-dehydroquinate dehydratase (Psychromonas ingrahamii (strain DSM 17664 / CCUG 51855 / 37)).